The following is a 512-amino-acid chain: Intermediate filament family orphan 2 (512 aa).

The 430-residue stretch at 50–479 (NIHLLKGLNV…RLIKGSADRN (430 aa)) folds into the IF rod domain. Residues 473–512 (KGSADRNSPSPSSVASSDSGSTDEIQEDLEREADVEPMVS) are disordered. A compositionally biased stretch (low complexity) spans 480–492 (SPSPSSVASSDSG). A compositionally biased stretch (acidic residues) spans 496 to 512 (EIQEDLEREADVEPMVS).

Belongs to the intermediate filament family.

The chain is Intermediate filament family orphan 2 (Iffo2) from Mus musculus (Mouse).